A 117-amino-acid polypeptide reads, in one-letter code: Minor capsid protein VP2 (117 aa).

This sequence belongs to the lagovirus VP2 protein family. In terms of assembly, homooligomer. The portal-like structure consists in 12 copies of VP2. Interacts with capsid protein VP1.

The protein resides in the virion. It is found in the host cytoplasm. Functionally, minor structural protein that forms a portal-like structure at a unique three-fold axis of symmetry, following binding to the host receptor. The channel formed by VP2 may allow the delivery of the viral genome through the host endosomal membrane. The polypeptide is Minor capsid protein VP2 (Oryctolagus cuniculus (Rabbit)).